We begin with the raw amino-acid sequence, 81 residues long: Small ribosomal subunit protein bS16 (81 aa).

This sequence belongs to the bacterial ribosomal protein bS16 family.

The chain is Small ribosomal subunit protein bS16 from Clostridium acetobutylicum (strain ATCC 824 / DSM 792 / JCM 1419 / IAM 19013 / LMG 5710 / NBRC 13948 / NRRL B-527 / VKM B-1787 / 2291 / W).